The chain runs to 230 residues: GTP cyclohydrolase III (230 aa).

Belongs to the archaeal-type GTP cyclohydrolase family.

The enzyme catalyses GTP + 3 H2O = 2-amino-5-formylamino-6-(5-phospho-D-ribosylamino)pyrimidin-4(3H)-one + 2 phosphate + 2 H(+). Functionally, catalyzes the formation of 2-amino-5-formylamino-6-ribofuranosylamino-4(3H)-pyrimidinone ribonucleotide monophosphate and inorganic phosphate from GTP. Also has an independent pyrophosphate phosphohydrolase activity. This chain is GTP cyclohydrolase III, found in Saccharolobus islandicus (strain M.14.25 / Kamchatka #1) (Sulfolobus islandicus).